Consider the following 1738-residue polypeptide: Sodium leak channel NALCN (1738 aa).

At 1-36 (MLKRKQSSRVEAQPVTDFGPDESLSDNADILWINKP) the chain is on the cytoplasmic side. A helical membrane pass occupies residues 37-57 (WVHSLLRICAIISVISVCMNT). Residues 58–65 (PMTFEHYP) are Extracellular-facing. A helical membrane pass occupies residues 66-90 (PLQYVTFTLDTLLMFLYTAEMIAKM). Residues 91 to 106 (HIRGIVKGDSSYVKDR) are Cytoplasmic-facing. A helical transmembrane segment spans residues 107–129 (WCVFDGFMVFCLWVSLVLQVFEI). Over 130–137 (ADIVDQMS) the chain is Extracellular. Residues 138–158 (PWGMLRIPRPLIMIRAFRIYF) form a helical; Voltage-sensor membrane-spanning segment. Residues 159–173 (RFELPRTRITNILKR) are Cytoplasmic-facing. The helical transmembrane segment at 174–199 (SGEQIWSVSIFLLFFLLLYGILGVQM) threads the bilayer. The Extracellular portion of the chain corresponds to 200–269 (FGTFTYHCVV…YSGFNEIGTS (70 aa)). Disulfide bonds link cysteine 207-cysteine 239 and cysteine 229-cysteine 245. 2 N-linked (GlcNAc...) asparagine glycosylation sites follow: asparagine 210 and asparagine 216. The segment at residues 270–289 (IFTVYEAASQEGWVFLMYRA) is an intramembrane region (pore-forming). The Extracellular portion of the chain corresponds to 290-294 (IDSFP). Residues 295 to 322 (RWRSYFYFITLIFFLAWLVKNVFIAVII) traverse the membrane as a helical segment. Topologically, residues 323–382 (ETFAEIRVQFQQMWGSRSSTTSTATTQMFHEDAAGGWQLVAVDVNKPQGRAPACLQKMMR) are cytoplasmic. Residues 383-403 (SSVFHMFILSMVTVDVIVAAS) traverse the membrane as a helical segment. Over 404–416 (NYYKGENFRRQYD) the chain is Extracellular. Residues 417–439 (EFYLAEVAFTVLFDLEALLKIWC) traverse the membrane as a helical segment. Over 440–447 (LGFTGYIS) the chain is Cytoplasmic. The helical transmembrane segment at 448-468 (SSLHKFELLLVIGTTLHVYPD) threads the bilayer. At 469 to 472 (LYHS) the chain is on the extracellular side. The chain crosses the membrane as a helical; Voltage-sensor span at residues 473 to 492 (QFTYFQVLRVVRLIKISPAL). The Cytoplasmic segment spans residues 493 to 502 (EDFVYKIFGP). A helical transmembrane segment spans residues 503 to 530 (GKKLGSLVVFTASLLIVMSAISLQMFCF). At 531-543 (VEELDRFTTFPRA) the chain is on the extracellular side. Positions 544-563 (FMSMFQILTQEGWVDVMDQT) form an intramembrane region, pore-forming. Over 564 to 569 (LNAVGH) the chain is Extracellular. The chain crosses the membrane as a helical span at residues 570–599 (MWAPVVAIYFILYHLFATLILLSLFVAVIL). The Cytoplasmic segment spans residues 600–886 (DNLELDEDLK…QLYDLLGLVT (287 aa)). The disordered stretch occupies residues 762-785 (QERRSLRHGSNSQRISRGKSLETL). Residues 795 to 830 (YRNAQREDSEIKMIQEKKEQAEMKRKVQEEELRENH) adopt a coiled-coil conformation. A helical transmembrane segment spans residues 887–906 (YLDWVMIIVTICSCISMMFE). At 907–915 (SPFRRVMHA) the chain is on the extracellular side. A helical transmembrane segment spans residues 916–939 (PTLQIAEYVFVIFMSIELNLKIMA). Over 940-947 (DGLFFTPT) the chain is Cytoplasmic. The chain crosses the membrane as a helical span at residues 948–972 (AVIRDFGGVMDIFIYLVSLIFLCWM). Residues 973 to 980 (PQNVPAES) lie on the Extracellular side of the membrane. Residues 981–1003 (GAQLLMVLRCLRPLRIFKLVPQM) traverse the membrane as a helical; Voltage-sensor segment. Topologically, residues 1004–1015 (RKVVRELFSGFK) are cytoplasmic. Residues 1016–1039 (EIFLVSILLLTLMLVFASFGVQLF) form a helical membrane-spanning segment. At 1040–1104 (AGKLAKCNDP…NFNFDNVGNA (65 aa)) the chain is on the extracellular side. Cysteines 1046 and 1057 form a disulfide. A glycan (N-linked (GlcNAc...) asparagine) is linked at asparagine 1064. Residues 1105-1124 (MLALFEVLSLKGWVEVRDVI) constitute an intramembrane region (pore-forming). The Extracellular segment spans residues 1125 to 1129 (IHRVG). A helical transmembrane segment spans residues 1130–1159 (PIHGIYIHVFVFLGCMIGLTLFVGVVIANF). The Cytoplasmic segment spans residues 1160 to 1210 (NENKGTALLTVDQRRWEDLKSRLKIAQPLHLPPRPDNDGFRAKMYDITQHP). Residues 1211–1227 (FFKRTIALLVLAQSVLL) traverse the membrane as a helical segment. Over 1228-1236 (SVKWDVEDP) the chain is Extracellular. A helical transmembrane segment spans residues 1237 to 1260 (VTVPLATMSVVFTFIFVLEVTMKI). Over 1261 to 1271 (IAMSPAGFWQS) the chain is Cytoplasmic. Residues 1272–1293 (RRNRYDLLVTSLGVVWVVLHFA) traverse the membrane as a helical segment. The Extracellular portion of the chain corresponds to 1294–1296 (LLN). Residues 1297–1318 (AYTYMMGACVIVFRFFSICGKH) traverse the membrane as a helical; Voltage-sensor segment. Residues 1319-1331 (VTLKMLLLTVVVS) lie on the Cytoplasmic side of the membrane. A helical membrane pass occupies residues 1332–1357 (MYKSFFIIVGMFLLLLCYAFAGVVLF). Topologically, residues 1358–1378 (GTVKYGENINRHANFSSAGKA) are extracellular. The segment at residues 1379 to 1398 (ITVLFRIVTGEDWNKIMHDC) is an intramembrane region (pore-forming). Over 1399–1420 (MVQPPFCTPDEFTYWATDCGNY) the chain is Extracellular. Cysteines 1405 and 1417 form a disulfide. A helical membrane pass occupies residues 1421-1447 (AGALMYFCSFYVIIAYIMLNLLVAIIV). Residues 1448 to 1738 (ENFSLFYSTE…DESGDDLLDI (291 aa)) lie on the Cytoplasmic side of the membrane. Residues 1611–1678 (PPSIETTQPS…QWRLPSAPKP (68 aa)) form a disordered region. Positions 1613–1632 (SIETTQPSEDTNANSQDNSM) are enriched in polar residues. The segment covering 1633-1648 (QPETSSQQQLLSPTLS) has biased composition (low complexity).

This sequence belongs to the NALCN family. As to quaternary structure, found in a complex with NALCN, UNC79, UNC80 and NACL1; these auxiliary subunits are indispensable for the function of NALCN channel. Interacts with UNC80; required for the NALCN activation/inhibition by GPCRs in neurons. Found in a complex with NALCN, UNC79 and UNC80; UNC80 bridges NALCN to UNC79. Interacts with CHRM3. Phosphorylated on tyrosine residues.

The protein resides in the cell membrane. The catalysed reaction is Na(+)(in) = Na(+)(out). Inhibited by low micromolar concentrations of Gd(3+) and high micromolar concentrations of verapamil. Insensitive to tetrodotoxin (TTX) and potentiated by low external Ca(2+) concentration. Functionally, voltage-gated ion channel responsible for the resting Na(+) permeability that controls neuronal excitability. NALCN channel functions as a multi-protein complex, which consists at least of NALCN, NALF1, UNC79 and UNC80. NALCN is the voltage-sensing, pore-forming subunit of the NALCN channel complex. NALCN channel complex is constitutively active and conducts monovalent cations but is blocked by physiological concentrations of extracellular divalent cations. In addition to its role in regulating neuronal excitability, is required for normal respiratory rhythm, systemic osmoregulation by controlling the serum sodium concentration and in the regulation of the intestinal pace-making activity in the interstitial cells of Cajal. NALCN channel is also activated by neuropeptides such as neurotensin and substance P (SP) through a SRC family kinases-dependent pathway. In addition, NALCN activity is enhanced/modulated by several GPCRs, such as CHRM3. The chain is Sodium leak channel NALCN from Homo sapiens (Human).